Reading from the N-terminus, the 185-residue chain is uncharacterized protein (185 aa).

As to expression, component of the acid-insoluble and acid-soluble organic matrix of calcified layers of the shell (at protein level).

It is found in the secreted. This is an uncharacterized protein from Lottia gigantea (Giant owl limpet).